The following is a 170-amino-acid chain: AP-5 complex subunit sigma-1 (170 aa).

As to quaternary structure, probably part of the adaptor protein complex 5 (AP-5) a tetramer composed of AP5B1, AP5M1, AP5S1 and AP5Z1. Interacts with ZFYVE26 and SPG11.

It localises to the cytoplasm. Its subcellular location is the cytosol. The protein resides in the late endosome membrane. The protein localises to the lysosome membrane. In terms of biological role, as part of AP-5, a probable fifth adaptor protein complex it may be involved in endosomal transport. The sequence is that of AP-5 complex subunit sigma-1 (Ap5s1) from Mus musculus (Mouse).